The sequence spans 138 residues: Putative pre-16S rRNA nuclease (138 aa).

It belongs to the YqgF nuclease family.

Its subcellular location is the cytoplasm. In terms of biological role, could be a nuclease involved in processing of the 5'-end of pre-16S rRNA. The chain is Putative pre-16S rRNA nuclease from Salmonella arizonae (strain ATCC BAA-731 / CDC346-86 / RSK2980).